The following is a 147-amino-acid chain: Ubiquitin-conjugating enzyme E2 D2 (147 aa).

A UBC core domain is found at 1-147 (MALKRIHKEL…AREWTQKYAM (147 aa)). Residue Cys85 is the Glycyl thioester intermediate of the active site.

The protein belongs to the ubiquitin-conjugating enzyme family. Interacts with SCF (SKP1-CUL1-F-box protein) E3 ubiquitin ligase complex. Interacts with CNOT4 (via RING domain). Interacts with E3 ubiquitin-protein ligases CBLC, PJA1 and PJA2. Interacts with PDZRN3. Interacts with PPP1R11. Interacts with E3 ubiquitin-protein ligase PHF7; the interaction inhibits cleavage of PHF7 and promotes association of the complex with the nucleosome core particle.

The enzyme catalyses S-ubiquitinyl-[E1 ubiquitin-activating enzyme]-L-cysteine + [E2 ubiquitin-conjugating enzyme]-L-cysteine = [E1 ubiquitin-activating enzyme]-L-cysteine + S-ubiquitinyl-[E2 ubiquitin-conjugating enzyme]-L-cysteine.. It catalyses the reaction S-ubiquitinyl-[E1 ubiquitin-activating enzyme]-L-cysteine + [acceptor protein]-L-lysine = [E1 ubiquitin-activating enzyme]-L-cysteine + N(6)-monoubiquitinyl-[acceptor protein]-L-lysine.. It functions in the pathway protein modification; protein ubiquitination. In terms of biological role, accepts ubiquitin from the E1 complex and catalyzes its covalent attachment to other proteins. In vitro catalyzes 'Lys-48'-linked polyubiquitination. Mediates the selective degradation of short-lived and abnormal proteins. Functions in the E6/E6-AP-induced ubiquitination of p53/TP53. Mediates ubiquitination of PEX5 and SQSTM1 and autoubiquitination of STUB1 and TRAF6. Involved in the signal-induced conjugation and subsequent degradation of NFKBIA, FBXW2-mediated GCM1 ubiquitination and degradation, MDM2-dependent degradation of p53/TP53 and the activation of MAVS in the mitochondria by RIGI in response to viral infection. Essential for viral activation of IRF3. The protein is Ubiquitin-conjugating enzyme E2 D2 (UBE2D2) of Bos taurus (Bovine).